Reading from the N-terminus, the 4454-residue chain is E3 ubiquitin-protein ligase HUWE1 (4454 aa).

Residues 521–575 (RASSSNSSTSISGPGPGPGPGPGPGPGPGPGPGPGPGLGPSLGPGPGPGPRPGVQ) are disordered. Residues 523-533 (SSSNSSTSISG) show a composition bias toward low complexity. Over residues 535-571 (GPGPGPGPGPGPGPGPGPGPGPGLGPSLGPGPGPGPR) the composition is skewed to pro residues. A phosphoserine mark is found at Ser-724 and Ser-725. 3 disordered regions span residues 781-834 (QKAD…VVGT), 1054-1077 (DEKA…AGSM), and 1094-1114 (TLAP…KSKI). Residues 801 to 811 (ASSEDEEEEEV) are compositionally biased toward acidic residues. The span at 813–832 (AMQSFNSAQQNETEPNQQVV) shows a compositional bias: polar residues. A Phosphoserine modification is found at Ser-816. Ser-1160 is modified (phosphoserine). A compositionally biased stretch (basic and acidic residues) spans 1367–1378 (LSKEKEGSRGEE). The disordered stretch occupies residues 1367 to 1396 (LSKEKEGSRGEEEAGQEEGGSRREPQVNQQ). In terms of domain architecture, UBA spans 1392–1431 (QVNQQQLQQLMDMGFTREHAMEALLNTSTMEQATEYLLTH). Phosphoserine is present on residues Ser-1444, Ser-1446, Ser-1458, and Ser-1471. One can recognise a UIM domain in the interval 1446–1465 (SEEDQMMRAIAMSLGQDIPM). Positions 1472–1491 (PEEVACRKEEEERKAREKQE) are disordered. The region spanning 1679-1756 (RAQMTKYLQS…ETGNRRPVML (78 aa)) is the WWE domain. Residues 1766–1802 (KNSKSSNGQELEKTLEESKETDIKRKENKGNDIPLAL) are disordered. Basic and acidic residues predominate over residues 1775–1795 (ELEKTLEESKETDIKRKENKG). At Ser-1983 the chain carries Phosphoserine. Disordered regions lie at residues 2095 to 2142 (APAE…SKPL), 2339 to 2420 (SLFG…QEMQ), and 2433 to 2556 (LERD…ASPL). Low complexity predominate over residues 2097 to 2112 (AETSTTGTSQGEGAST). Thr-2112 is modified (phosphothreonine). Residues 2114-2134 (EETREGKKDKEGDRTSEEGKQ) show a composition bias toward basic and acidic residues. Residues 2339–2368 (SLFGSKSASSKSKSEQDAQGASQDSSSHQQ) are compositionally biased toward low complexity. Phosphoserine is present on Ser-2343. At Lys-2344 the chain carries N6-acetyllysine. 2 stretches are compositionally biased toward acidic residues: residues 2372–2383 (EPGEAEVQEEDH) and 2391–2402 (ADGDIMDGEAET). Phosphoserine is present on residues Ser-2439, Ser-2442, and Ser-2468. Residues 2465 to 2475 (SNLSQASTLQA) are compositionally biased toward polar residues. Over residues 2485–2549 (DPEDEEEHTQ…SEMELDEDYP (65 aa)) the composition is skewed to acidic residues. Phosphoserine occurs at positions 2604, 2609, and 2612. Phosphothreonine is present on Thr-2631. 3 positions are modified to phosphoserine: Ser-2661, Ser-2672, and Ser-2696. A compositionally biased stretch (basic and acidic residues) spans 2781 to 2793 (IIDKGKEDKENRD). Disordered stretches follow at residues 2781-3047 (IIDK…GVDP) and 3113-3136 (QQRA…MDPV). Residues 2794 to 2813 (QSAQCTVSKTNDSTEQNVSD) are compositionally biased toward polar residues. Low complexity predominate over residues 2815–2849 (TPMPDSYPTTPSSTDAPTSESKETLGTLQPSQQQP). The residue at position 2828 (Thr-2828) is a Phosphothreonine. Polar residues-rich tracts occupy residues 2895–2912 (AETT…TSLS), 2924–2941 (AVSS…SLAS), and 2954–2967 (AGSS…SSTP). Phosphoserine occurs at positions 2903, 2910, 2912, 2938, 2964, and 2965. Thr-2966 carries the phosphothreonine modification. Positions 2990-3009 (PPEDSSPPASSESSSTRDSA) are enriched in low complexity. Position 2995 is a phosphoserine (Ser-2995). Phosphoserine occurs at positions 3193, 3194, 3199, 3204, and 3212. An Omega-N-methylarginine modification is found at Arg-3226. 5 disordered regions span residues 3320–3343 (PKLS…SHEN), 3431–3458 (QRTK…SQSS), 3482–3501 (GKNS…ETSL), 3548–3590 (SEVQ…TTPV), and 3615–3642 (TPTT…EGGS). A compositionally biased stretch (basic and acidic residues) spans 3432 to 3446 (RTKETNCESDRERGS). Residues 3447-3458 (KQACSPCSSQSS) show a composition bias toward low complexity. Low complexity-rich tracts occupy residues 3552-3579 (TNSS…ATAP) and 3615-3628 (TPTT…TSTT). Residues Ser-3633, Ser-3740, Ser-3830, Ser-3835, Ser-3837, and Ser-3838 each carry the phosphoserine modification. Positions 3815 to 3836 (TRRANKKAKQTGRLGSSGLGSA) are disordered. Residues 3826-3836 (GRLGSSGLGSA) are compositionally biased toward low complexity. Disordered stretches follow at residues 3859-3927 (EGQR…LPLL) and 3974-4028 (RESK…SSSL). Residues 3871–3880 (TSESSNQSET) are compositionally biased toward polar residues. Ser-3887, Ser-3895, and Ser-3907 each carry phosphoserine. Positions 3894 to 3905 (PSPSAQDTQSIV) are enriched in polar residues. At Thr-3910 the chain carries Phosphothreonine. Composition is skewed to basic and acidic residues over residues 3913–3922 (GEKEKEERPP) and 3974–3995 (RESK…KDEP). 2 positions are modified to phosphoserine: Ser-3986 and Ser-3999. Pro residues predominate over residues 3996-4005 (PPLSPAPLTP). Thr-4004 and Thr-4007 each carry phosphothreonine. The segment covering 4018 to 4028 (EPSSMHISSSL) has biased composition (polar residues). The HECT domain maps to 4118–4454 (SPEEMKNRLY…QECSEGFGLA (337 aa)). Tyr-4351 carries the post-translational modification Phosphotyrosine. Catalysis depends on Cys-4421, which acts as the Glycyl thioester intermediate.

This sequence belongs to the UPL family. TOM1/PTR1 subfamily. As to quaternary structure, interacts with isoform p14ARF of CDKN2A which strongly inhibits HUWE1 ubiquitin ligase activity. Interacts with MYCN, POLB and CDC6. Interacts with isoform 2 of PA2G4. Interacts with NR1D1. Interacts with AMBRA1. Interacts with HAPSTR1. Interacts with HAPSTR2. In hepatocytes, interacts with PAQR3; the interaction promotes PPARA poylubiquitination and STUB1-mediated degradation. Phosphorylated on tyrosine, phosphorylation is probably required for its ability to inhibit TP53 transactivation. Widely expressed.

Its subcellular location is the cytoplasm. The protein resides in the nucleus. It is found in the mitochondrion. The enzyme catalyses S-ubiquitinyl-[E2 ubiquitin-conjugating enzyme]-L-cysteine + [acceptor protein]-L-lysine = [E2 ubiquitin-conjugating enzyme]-L-cysteine + N(6)-ubiquitinyl-[acceptor protein]-L-lysine.. It functions in the pathway protein modification; protein ubiquitination. E3 ubiquitin-protein ligase which mediates ubiquitination and subsequent proteasomal degradation of target proteins. Regulates apoptosis by catalyzing the polyubiquitination and degradation of MCL1. Mediates monoubiquitination of DNA polymerase beta (POLB) at 'Lys-41', 'Lys-61' and 'Lys-81', thereby playing a role in base-excision repair. Also ubiquitinates the p53/TP53 tumor suppressor and core histones including H1, H2A, H2B, H3 and H4. Ubiquitinates MFN2 to negatively regulate mitochondrial fusion in response to decreased stearoylation of TFRC. Ubiquitination of MFN2 also takes place following induction of mitophagy; AMBRA1 acts as a cofactor for HUWE1-mediated ubiquitination. Regulates neural differentiation and proliferation by catalyzing the polyubiquitination and degradation of MYCN. May regulate abundance of CDC6 after DNA damage by polyubiquitinating and targeting CDC6 to degradation. Mediates polyubiquitination of PA2G4. Acts in concert with MYCBP2 to regulate the circadian clock gene expression by promoting the lithium-induced ubiquination and degradation of NR1D1. Binds to an upstream initiator-like sequence in the preprodynorphin gene. Mediates HAPSTR1 degradation, but is also a required cofactor in the pathway by which HAPSTR1 governs stress signaling. Acts as a regulator of the JNK and NF-kappa-B signaling pathways by mediating assembly of heterotypic 'Lys-63'-/'Lys-48'-linked branched ubiquitin chains that are then recognized by TAB2: HUWE1 mediates branching of 'Lys-48'-linked chains of substrates initially modified with 'Lys-63'-linked conjugates by TRAF6. 'Lys-63'-/'Lys-48'-linked branched ubiquitin chains protect 'Lys-63'-linkages from CYLD deubiquitination. Ubiquitinates PPARA in hepatocytes. The chain is E3 ubiquitin-protein ligase HUWE1 (Huwe1) from Rattus norvegicus (Rat).